Reading from the N-terminus, the 127-residue chain is MAKPTRKRRVKKNIEFGVAHIHATFNNTIVMITDVHGNALAWSSAGALGFKGSRKSTPFAAQMAAEAAAKSAQEHGLKTVEVTVKGPGSGRESAIRALAAAGLEVTAIRDVTPVPHNGARPPKRRRV.

The protein belongs to the universal ribosomal protein uS11 family. As to quaternary structure, part of the 30S ribosomal subunit. Interacts with proteins S7 and S18. Binds to IF-3.

In terms of biological role, located on the platform of the 30S subunit, it bridges several disparate RNA helices of the 16S rRNA. Forms part of the Shine-Dalgarno cleft in the 70S ribosome. The protein is Small ribosomal subunit protein uS11 of Streptococcus pyogenes serotype M49 (strain NZ131).